The following is a 320-amino-acid chain: Adenosine receptor A3 (320 aa).

Over 1–16 (MKANNTTTSALWLQIT) the chain is Extracellular. 2 N-linked (GlcNAc...) asparagine glycosylation sites follow: Asn4 and Asn5. Residues 17 to 39 (YITMEAAIGLCAVVGNMLVIWVV) form a helical membrane-spanning segment. The Cytoplasmic portion of the chain corresponds to 40–50 (KLNRTLRTTTF). A helical membrane pass occupies residues 51–74 (YFIVSLALADIAVGVLVIPLAIAV). Topologically, residues 75 to 86 (SLEVQMHFYACL) are extracellular. The cysteines at positions 85 and 168 are disulfide-linked. Residues 87–108 (FMSCVLLVFTHASIMSLLAIAV) form a helical membrane-spanning segment. At 109-128 (DRYLRVKLTVRYRTVTTQRR) the chain is on the cytoplasmic side. A helical membrane pass occupies residues 129-150 (IWLFLGLCWLVSFLVGLTPMFG). Residues 151–179 (WNRKVTLELSQNSSTLSCHFRSVVGLDYM) are Extracellular-facing. The chain crosses the membrane as a helical span at residues 180 to 200 (VFFSFITWILIPLVVMCIIYL). Residues 201 to 233 (DIFYIIRNKLSQNLTGFRETRAFYGREFKTAKS) are Cytoplasmic-facing. A helical membrane pass occupies residues 234-257 (LFLVLFLFALCWLPLSIINFVSYF). At 258-263 (NVKIPE) the chain is on the extracellular side. The helical transmembrane segment at 264–286 (IAMCLGILLSHANSMMNPIVYAC) threads the bilayer. Topologically, residues 287–320 (KIKKFKETYFVILRACRLCQTSDSLDSNLEQTTE) are cytoplasmic. Cys305 carries S-palmitoyl cysteine lipidation. Phosphothreonine occurs at positions 307, 318, and 319.

The protein belongs to the G-protein coupled receptor 1 family. Post-translationally, phosphorylation on Thr-318 and Thr-319 may be crucial for rapid desensitization. Phosphorylation on Thr-318 may be necessary for phosphorylation on Thr-319 to occur. In terms of tissue distribution, testis, particularly in spermatocytes and spermatids but not in spermatogonia. Low levels in the brain.

Its subcellular location is the cell membrane. Its function is as follows. Receptor for adenosine. The activity of this receptor is mediated by G proteins which inhibits adenylyl cyclase. May play a role during reproduction. In Rattus norvegicus (Rat), this protein is Adenosine receptor A3 (Adora3).